Reading from the N-terminus, the 83-residue chain is Kappa-theraphotoxin-Cg2b (83 aa).

A signal peptide spans 1–21 (MKGSAFAIILGLVVLCACSFA). Residues 22–53 (EDEQDQFASPNELLRSMFLESRHELIPEVEGR) constitute a propeptide that is removed on maturation. Disulfide bonds link Cys55–Cys69, Cys62–Cys74, and Cys68–Cys78.

Belongs to the neurotoxin 30 (phrixotoxin) family. In terms of tissue distribution, expressed by the venom gland.

The protein localises to the secreted. Functionally, probable ion channel inhibitor. This chain is Kappa-theraphotoxin-Cg2b, found in Chilobrachys guangxiensis (Chinese earth tiger tarantula).